Here is a 266-residue protein sequence, read N- to C-terminus: Tropinone reductase homolog At1g07440 (266 aa).

18 to 42 is an NADP(+) binding site; that stretch reads LVTGGTKGIGHAIVEEFAGFGAVIH. Residue S151 coordinates substrate. The active-site Proton acceptor is the Y164.

This sequence belongs to the short-chain dehydrogenases/reductases (SDR) family. SDR65C subfamily.

This Arabidopsis thaliana (Mouse-ear cress) protein is Tropinone reductase homolog At1g07440.